Consider the following 118-residue polypeptide: Small ribosomal subunit protein uS13 (118 aa).

Residues 94–118 form a disordered region; it reads SLPLRGQRTKTNARTRKGPRKPIKK.

The protein belongs to the universal ribosomal protein uS13 family. As to quaternary structure, part of the 30S ribosomal subunit. Forms a loose heterodimer with protein S19. Forms two bridges to the 50S subunit in the 70S ribosome.

Functionally, located at the top of the head of the 30S subunit, it contacts several helices of the 16S rRNA. In the 70S ribosome it contacts the 23S rRNA (bridge B1a) and protein L5 of the 50S subunit (bridge B1b), connecting the 2 subunits; these bridges are implicated in subunit movement. Contacts the tRNAs in the A and P-sites. This chain is Small ribosomal subunit protein uS13, found in Aliivibrio fischeri (strain ATCC 700601 / ES114) (Vibrio fischeri).